The chain runs to 139 residues: Putative nickel-responsive regulator (139 aa).

His79, His90, His92, and Cys98 together coordinate Ni(2+).

This sequence belongs to the transcriptional regulatory CopG/NikR family. Ni(2+) serves as cofactor.

In terms of biological role, transcriptional regulator. The polypeptide is Putative nickel-responsive regulator (Pelobacter propionicus (strain DSM 2379 / NBRC 103807 / OttBd1)).